Reading from the N-terminus, the 397-residue chain is Phosphopentomutase (397 aa).

Residues Asp-12, Asp-289, His-294, Asp-330, His-331, and His-342 each coordinate Mn(2+).

This sequence belongs to the phosphopentomutase family. It depends on Mn(2+) as a cofactor.

It localises to the cytoplasm. The enzyme catalyses 2-deoxy-alpha-D-ribose 1-phosphate = 2-deoxy-D-ribose 5-phosphate. It carries out the reaction alpha-D-ribose 1-phosphate = D-ribose 5-phosphate. The protein operates within carbohydrate degradation; 2-deoxy-D-ribose 1-phosphate degradation; D-glyceraldehyde 3-phosphate and acetaldehyde from 2-deoxy-alpha-D-ribose 1-phosphate: step 1/2. Functionally, isomerase that catalyzes the conversion of deoxy-ribose 1-phosphate (dRib-1-P) and ribose 1-phosphate (Rib-1-P) to deoxy-ribose 5-phosphate (dRib-5-P) and ribose 5-phosphate (Rib-5-P), respectively. This chain is Phosphopentomutase, found in Limosilactobacillus reuteri (strain DSM 20016) (Lactobacillus reuteri).